The following is a 215-amino-acid chain: Ribonuclease HII (215 aa).

Residues Lys19–Thr214 enclose the RNase H type-2 domain. Positions 25, 26, and 121 each coordinate a divalent metal cation.

This sequence belongs to the RNase HII family. Requires Mn(2+) as cofactor. It depends on Mg(2+) as a cofactor.

It localises to the cytoplasm. The catalysed reaction is Endonucleolytic cleavage to 5'-phosphomonoester.. Endonuclease that specifically degrades the RNA of RNA-DNA hybrids. In Fusobacterium nucleatum subsp. nucleatum (strain ATCC 25586 / DSM 15643 / BCRC 10681 / CIP 101130 / JCM 8532 / KCTC 2640 / LMG 13131 / VPI 4355), this protein is Ribonuclease HII.